A 97-amino-acid chain; its full sequence is Integration host factor subunit alpha (97 aa).

A disordered region spans residues 50–71 (FGNFTLRDKPQRPGRNPKTGEE).

Belongs to the bacterial histone-like protein family. Heterodimer of an alpha and a beta chain.

In terms of biological role, this protein is one of the two subunits of integration host factor, a specific DNA-binding protein that functions in genetic recombination as well as in transcriptional and translational control. The protein is Integration host factor subunit alpha of Legionella pneumophila (strain Paris).